Consider the following 56-residue polypeptide: Small ribosomal subunit protein uS14 (56 aa).

4 residues coordinate Zn(2+): C21, C24, C39, and C42.

This sequence belongs to the universal ribosomal protein uS14 family. Requires Zn(2+) as cofactor.

This chain is Small ribosomal subunit protein uS14 (RPS29), found in Eremothecium gossypii (strain ATCC 10895 / CBS 109.51 / FGSC 9923 / NRRL Y-1056) (Yeast).